We begin with the raw amino-acid sequence, 113 residues long: UPF0060 membrane protein Mmcs_2513 (113 aa).

The next 4 membrane-spanning stretches (helical) occupy residues alanine 12–valine 32, glycine 37–phenylalanine 57, isoleucine 66–aspartate 86, and arginine 92–proline 112.

This sequence belongs to the UPF0060 family.

The protein localises to the cell membrane. The sequence is that of UPF0060 membrane protein Mmcs_2513 from Mycobacterium sp. (strain MCS).